The sequence spans 106 residues: Urease subunit beta (106 aa).

Belongs to the urease beta subunit family. Heterotrimer of UreA (gamma), UreB (beta) and UreC (alpha) subunits. Three heterotrimers associate to form the active enzyme.

Its subcellular location is the cytoplasm. The catalysed reaction is urea + 2 H2O + H(+) = hydrogencarbonate + 2 NH4(+). The protein operates within nitrogen metabolism; urea degradation; CO(2) and NH(3) from urea (urease route): step 1/1. The sequence is that of Urease subunit beta from Synechococcus sp. (strain CC9605).